Consider the following 216-residue polypeptide: MKQDSRFPNLFITDHPLIQHKLTHMRDKDTSTRTFRELLREITLLMGYEITRNLPITTKRVETPLVAVDAPVIAGKKLAIVPVLRAGIGMSDGLLDLVPSARVGHIGVYRAEDHRPVEYLVRLPDLEDRIFILCDPMVATGYSAVHAVDVLKRRNVPAANIMFVALVAAPEGVQVFQDAHPDVKLFVASLDSHLNEHAYIVPGLGDAGDRLFGTKN.

Residues arginine 85, arginine 110, and 135–143 contribute to the 5-phospho-alpha-D-ribose 1-diphosphate site; that span reads DPMVATGYS. Residues isoleucine 200 and 205-207 each bind uracil; that span reads GDA. 5-phospho-alpha-D-ribose 1-diphosphate is bound at residue aspartate 206.

The protein belongs to the UPRTase family. Mg(2+) is required as a cofactor.

The catalysed reaction is UMP + diphosphate = 5-phospho-alpha-D-ribose 1-diphosphate + uracil. It participates in pyrimidine metabolism; UMP biosynthesis via salvage pathway; UMP from uracil: step 1/1. Allosterically activated by GTP. Its function is as follows. Catalyzes the conversion of uracil and 5-phospho-alpha-D-ribose 1-diphosphate (PRPP) to UMP and diphosphate. The sequence is that of Uracil phosphoribosyltransferase from Burkholderia ambifaria (strain MC40-6).